A 463-amino-acid chain; its full sequence is Chromosomal replication initiator protein DnaA (463 aa).

Residues 1-83 are domain I, interacts with DnaA modulators; the sequence is MSTNQIILTD…LQLFQHYNNT (83 aa). The segment at 83 to 124 is domain II; it reads TIKSIEIITKELPGTTQTVIELPTKTFADIGSSELNSENIFS. The tract at residues 125 to 343 is domain III, AAA+ region; that stretch reads TLDVRFTFDN…GALNKVIAHS (219 aa). The ATP site is built by G171, G173, K174, and T175. Positions 344-463 are domain IV, binds dsDNA; the sequence is NFTLKEITLE…INLLMKILQN (120 aa).

The protein belongs to the DnaA family. As to quaternary structure, oligomerizes as a right-handed, spiral filament on DNA at oriC.

It is found in the cytoplasm. Plays an essential role in the initiation and regulation of chromosomal replication. ATP-DnaA binds to the origin of replication (oriC) to initiate formation of the DNA replication initiation complex once per cell cycle. Binds the DnaA box (a 9 base pair repeat at the origin) and separates the double-stranded (ds)DNA. Forms a right-handed helical filament on oriC DNA; dsDNA binds to the exterior of the filament while single-stranded (ss)DNA is stabiized in the filament's interior. The ATP-DnaA-oriC complex binds and stabilizes one strand of the AT-rich DNA unwinding element (DUE), permitting loading of DNA polymerase. After initiation quickly degrades to an ADP-DnaA complex that is not apt for DNA replication. Binds acidic phospholipids. In Rickettsia felis (strain ATCC VR-1525 / URRWXCal2) (Rickettsia azadi), this protein is Chromosomal replication initiator protein DnaA.